The chain runs to 300 residues: Putative 1-phosphofructokinase (300 aa).

Residues 214 to 219 (SDGAQG) and 246 to 247 (GD) contribute to the ATP site. The active-site Proton acceptor is the Asp-247.

Belongs to the carbohydrate kinase PfkB family.

The catalysed reaction is beta-D-fructose 1-phosphate + ATP = beta-D-fructose 1,6-bisphosphate + ADP + H(+). In terms of biological role, catalyzes the ATP-dependent phosphorylation of fructose-l-phosphate to fructose-l,6-bisphosphate. The sequence is that of Putative 1-phosphofructokinase (fruK) from Mycoplasma pneumoniae (strain ATCC 29342 / M129 / Subtype 1) (Mycoplasmoides pneumoniae).